A 417-amino-acid polypeptide reads, in one-letter code: uncharacterized protein (417 aa).

Positions 1–21 (MPYYWGAILIGGVFLAGCTQN) are cleaved as a signal peptide.

This is an uncharacterized protein from Methanocaldococcus jannaschii (strain ATCC 43067 / DSM 2661 / JAL-1 / JCM 10045 / NBRC 100440) (Methanococcus jannaschii).